Reading from the N-terminus, the 424-residue chain is Serine--tRNA ligase (424 aa).

230–232 is a binding site for L-serine; the sequence is TAE. 261–263 contacts ATP; it reads RSE. Glutamate 284 provides a ligand contact to L-serine. Residue 348-351 coordinates ATP; it reads EISS. Serine 384 serves as a coordination point for L-serine.

It belongs to the class-II aminoacyl-tRNA synthetase family. Type-1 seryl-tRNA synthetase subfamily. As to quaternary structure, homodimer. The tRNA molecule binds across the dimer.

The protein localises to the cytoplasm. The enzyme catalyses tRNA(Ser) + L-serine + ATP = L-seryl-tRNA(Ser) + AMP + diphosphate + H(+). It catalyses the reaction tRNA(Sec) + L-serine + ATP = L-seryl-tRNA(Sec) + AMP + diphosphate + H(+). It participates in aminoacyl-tRNA biosynthesis; selenocysteinyl-tRNA(Sec) biosynthesis; L-seryl-tRNA(Sec) from L-serine and tRNA(Sec): step 1/1. In terms of biological role, catalyzes the attachment of serine to tRNA(Ser). Is also able to aminoacylate tRNA(Sec) with serine, to form the misacylated tRNA L-seryl-tRNA(Sec), which will be further converted into selenocysteinyl-tRNA(Sec). The polypeptide is Serine--tRNA ligase (Streptococcus pneumoniae serotype 4 (strain ATCC BAA-334 / TIGR4)).